A 527-amino-acid polypeptide reads, in one-letter code: Bifunctional dihydrofolate reductase-thymidylate synthase (527 aa).

Residues 28 to 238 (PFSVVVASDE…KKYQFEKLVP (211 aa)) form the DHFR domain. Residue valine 32 participates in substrate binding. Residues alanine 34 and 40–46 (GIGDGGT) each bind NADP(+). Residue aspartate 54 coordinates substrate. NADP(+)-binding positions include 84–86 (RKT) and 105–108 (LSRS). Substrate-binding residues include isoleucine 160, tyrosine 166, and threonine 184. 161 to 168 (GGGTIYKQ) serves as a coordination point for NADP(+). Residues 243-527 (EEQYLNLVGR…YPVISMEMAV (285 aa)) are thymidylate synthase. Position 263 (arginine 263) interacts with dUMP. Cysteine 409 is a catalytic residue. Residues histidine 410, 428-432 (QRSCD), asparagine 440, and 470-472 (HVY) contribute to the dUMP site.

The protein in the N-terminal section; belongs to the dihydrofolate reductase family. This sequence in the C-terminal section; belongs to the thymidylate synthase family. As to quaternary structure, homodimer.

The enzyme catalyses dUMP + (6R)-5,10-methylene-5,6,7,8-tetrahydrofolate = 7,8-dihydrofolate + dTMP. It catalyses the reaction (6S)-5,6,7,8-tetrahydrofolate + NADP(+) = 7,8-dihydrofolate + NADPH + H(+). It participates in pyrimidine metabolism; dTTP biosynthesis. Its pathway is cofactor biosynthesis; tetrahydrofolate biosynthesis; 5,6,7,8-tetrahydrofolate from 7,8-dihydrofolate: step 1/1. Bifunctional enzyme. Involved in de novo dTMP biosynthesis. Key enzyme in folate metabolism. Catalyzes an essential reaction for de novo glycine and purine synthesis, DNA precursor synthesis, and for the conversion of dUMP to dTMP. The sequence is that of Bifunctional dihydrofolate reductase-thymidylate synthase from Trypanosoma brucei brucei.